We begin with the raw amino-acid sequence, 219 residues long: Ribose-5-phosphate isomerase A (219 aa).

Residues 28-31 (TGST), 81-84 (DGAD), and 94-97 (KGGG) contribute to the substrate site. Catalysis depends on Glu103, which acts as the Proton acceptor. Lys121 is a binding site for substrate.

The protein belongs to the ribose 5-phosphate isomerase family. In terms of assembly, homodimer.

It carries out the reaction aldehydo-D-ribose 5-phosphate = D-ribulose 5-phosphate. It functions in the pathway carbohydrate degradation; pentose phosphate pathway; D-ribose 5-phosphate from D-ribulose 5-phosphate (non-oxidative stage): step 1/1. Its function is as follows. Catalyzes the reversible conversion of ribose-5-phosphate to ribulose 5-phosphate. The polypeptide is Ribose-5-phosphate isomerase A (Pectobacterium carotovorum subsp. carotovorum (strain PC1)).